Here is a 335-residue protein sequence, read N- to C-terminus: Phenylalanine--tRNA ligase alpha subunit (335 aa).

Position 262 (Glu262) interacts with Mg(2+).

It belongs to the class-II aminoacyl-tRNA synthetase family. Phe-tRNA synthetase alpha subunit type 1 subfamily. As to quaternary structure, tetramer of two alpha and two beta subunits. The cofactor is Mg(2+).

It localises to the cytoplasm. It catalyses the reaction tRNA(Phe) + L-phenylalanine + ATP = L-phenylalanyl-tRNA(Phe) + AMP + diphosphate + H(+). This Prochlorococcus marinus (strain MIT 9313) protein is Phenylalanine--tRNA ligase alpha subunit.